The sequence spans 325 residues: Cytochrome f (325 aa).

The first 40 residues, 1–40 (MSKINLSTMWSSFIKKIAKTILVAIACISLFLTSSPAANA), serve as a signal peptide directing secretion. Residues Tyr41, Cys62, Cys65, and His66 each coordinate heme. A helical membrane pass occupies residues 291–311 (VKWLMAFFALVMLAQIMLVLK).

Belongs to the cytochrome f family. In terms of assembly, the 4 large subunits of the cytochrome b6-f complex are cytochrome b6, subunit IV (17 kDa polypeptide, PetD), cytochrome f and the Rieske protein, while the 4 small subunits are PetG, PetL, PetM and PetN. The complex functions as a dimer. Requires heme as cofactor.

The protein resides in the cellular thylakoid membrane. Functionally, component of the cytochrome b6-f complex, which mediates electron transfer between photosystem II (PSII) and photosystem I (PSI), cyclic electron flow around PSI, and state transitions. The chain is Cytochrome f from Trichodesmium erythraeum (strain IMS101).